Consider the following 397-residue polypeptide: MKREECLLVLAGLLARVGFFSYGIYQDAHFAVKYTDIDYHVFHDAARYVAQGNSPYLRDTYRYTPLLSWMLVPNHWLQWVHFGKFIFVLFDLLAGVMVMNLLGKCGRRRKLILASLWLLNPVVITVSTRGNAESVMAFLIMWFLVHLRNRQFALSGFVYGVAIHFKIYPIIYALPISIYIRSSEGSRWFLRLLTMGIATLATLVGCGIGMYYIYGWEFLEHAYIYHFTRTDHRHNFSLWNMLLYLDSSGVVPTTINWAEFAFLPQLFICAAVTYVLWEAPTFQNMQCVLFLQTFAFVTYNKVCTSQYFIWYLLFLPSFLLDTTLSGAKGIFLIFLWVGTQAWWLYNGYLLEFEGKNMFYPRLFSACVTFFLANVYLLAQFILDCRRRNYQTNIKKTN.

9 helical membrane passes run 5–25 (ECLLVLAGLLARVGFFSYGIY), 79–99 (WVHFGKFIFVLFDLLAGVMVM), 111–128 (LILASLWLLNPVVITVST), 156–176 (GFVYGVAIHFKIYPIIYALPI), 193–213 (LTMGIATLATLVGCGIGMYYI), 257–277 (WAEFAFLPQLFICAAVTYVLW), 307–327 (YFIWYLLFLPSFLLDTTLSGA), 330–350 (IFLIFLWVGTQAWWLYNGYLL), and 362–382 (LFSACVTFFLANVYLLAQFIL).

The protein belongs to the PIGM family.

It localises to the endoplasmic reticulum membrane. Its pathway is glycolipid biosynthesis; glycosylphosphatidylinositol-anchor biosynthesis. Its function is as follows. Mannosyltransferase involved in glycosylphosphatidylinositol-anchor biosynthesis. Transfers the first alpha-1,4-mannose to GlcN-acyl-PI during GPI precursor assembly. Required for cell wall integrity. The polypeptide is GPI mannosyltransferase 1 (GPI14) (Eremothecium gossypii (strain ATCC 10895 / CBS 109.51 / FGSC 9923 / NRRL Y-1056) (Yeast)).